A 94-amino-acid chain; its full sequence is Co-chaperonin GroES (94 aa).

It belongs to the GroES chaperonin family. As to quaternary structure, heptamer of 7 subunits arranged in a ring. Interacts with the chaperonin GroEL.

It localises to the cytoplasm. Together with the chaperonin GroEL, plays an essential role in assisting protein folding. The GroEL-GroES system forms a nano-cage that allows encapsulation of the non-native substrate proteins and provides a physical environment optimized to promote and accelerate protein folding. GroES binds to the apical surface of the GroEL ring, thereby capping the opening of the GroEL channel. This chain is Co-chaperonin GroES, found in Limosilactobacillus reuteri (strain DSM 20016) (Lactobacillus reuteri).